We begin with the raw amino-acid sequence, 291 residues long: Protease HtpX (291 aa).

The next 2 membrane-spanning stretches (helical) occupy residues 4-24 (IALF…VLNI) and 36-56 (LSGL…ISLM). Zn(2+) is bound at residue His143. Glu144 is an active-site residue. Residue His147 participates in Zn(2+) binding. Helical transmembrane passes span 151-171 (GDMI…IFLS) and 199-219 (FIVS…LTMW). A Zn(2+)-binding site is contributed by Glu225.

This sequence belongs to the peptidase M48B family. Zn(2+) is required as a cofactor.

It is found in the cell inner membrane. The protein is Protease HtpX of Aliivibrio fischeri (strain MJ11) (Vibrio fischeri).